The primary structure comprises 455 residues: MALSPVQDPPSHTDKTMPRRAFRRSCDRCHAQKIKCIGSEGAVARASCQRCQQAGLRCVYSERCPKRKLPKPNPAESSPASSTAGLHTSSSDSSPPVPSDGLPLDLPGPDSSGVSLQFLDPSADCDWPWSSIGVDETVVNNCLDLSHGHGHGDLSCQLELPMPDLPSPFEFSAEKSPSPSVSGSIAGAVSAQRELFDGLSTVSQELEAILLAVAVEWPKQEIWTYPIGTFFNASRRLLVYLQQQSNTRSDQGMLNECLRTKNLFMAVHCYMLIVKIFTSLSELLLSQIRHSQAGQLTPLEGHQFEPPPSSSRDRSSVDTMPIFNPNLHIGGLFSYLNPFMHALSSACTTLRVGVQLLRENESALGIPPAQGVAASVSMGKEEWADGEDVASAVTTADEDLRQPASRILSMVWSDEVGDQKAKSADAAGPRSRTLAVLRRCNREIFSLARQHNLAS.

Residues 1–22 are disordered; the sequence is MALSPVQDPPSHTDKTMPRRAF. Residues 26–58 constitute a DNA-binding region (zn(2)-C6 fungal-type); the sequence is CDRCHAQKIKCIGSEGAVARASCQRCQQAGLRC. Disordered regions lie at residues 68-113 and 296-317; these read KLPK…DSSG and LTPLEGHQFEPPPSSSRDRSSV. Residues 75-88 show a composition bias toward polar residues; it reads AESSPASSTAGLHT. Low complexity predominate over residues 89-113; the sequence is SSSDSSPPVPSDGLPLDLPGPDSSG.

The protein localises to the nucleus. In terms of biological role, transcription factor that regulates the gene cluster that mediates the biosynthesis of monakolin K, also known as lovastatin, and which acts as a potent competitive inhibitor of HMG-CoA reductase. Monakolin K biosynthesis is performed in two stages. The first stage is catalyzed by the nonaketide synthase mokA, which belongs to type I polyketide synthases and catalyzes the iterative nine-step formation of the polyketide. This PKS stage is completed by the action of dehydrogenase mokE, which catalyzes the NADPH-dependent reduction of the unsaturated tetra-, penta- and heptaketide intermediates that arise during the mokA-mediated biosynthesis of the nonaketide chain and leads to dihydromonacolin L. Covalently bound dihydromonacolin L is released from mokA by the mokD esterase. Conversion of dihydromonacolin L into monacolin L and then monacolin J is subsequently performed with the participation of molecular oxygen and P450 monoogygenase mokC. Finally, mokF performs the conversion of monacoline J to monacoline K through the addition of the side-chain diketide moiety (2R)-2-methylbutanoate produced by the diketide synthase mokB. HMG-CoA reductase mokG may act as a down-regulator of monacolin K production. This chain is Transcription factor mokH, found in Monascus pilosus (Red mold).